The chain runs to 1045 residues: Suppression of tumorigenicity 18 protein (1045 aa).

3 disordered regions span residues 38-90 (KKRR…NDHA), 158-228 (KAES…YNRK), and 340-364 (PRVTDANGRQIFTNKHSPRPERREA). Over residues 52-63 (NKRKSLLMKPRH) the composition is skewed to basic residues. Basic and acidic residues-rich tracts occupy residues 69-90 (GCKESPDNRNEDDGLLETNDHA) and 159-177 (AESDEAHEGSMVHSDNGRD). 6 consecutive CCHHC-type zinc fingers follow at residues 357–400 (PRPE…PLEI), 401–444 (LAMH…KLAM), 713–756 (RDLK…LKSL), 757–800 (MAAN…GIKM), 805–848 (EEKE…QKEN), and 858–901 (KLNK…IKKV). Zn(2+) is bound by residues cysteine 366, cysteine 371, histidine 384, cysteine 390, cysteine 410, cysteine 415, histidine 428, cysteine 434, cysteine 722, cysteine 727, histidine 740, cysteine 746, cysteine 766, cysteine 771, histidine 784, cysteine 790, cysteine 814, cysteine 819, histidine 832, cysteine 838, cysteine 867, cysteine 872, histidine 885, and cysteine 891. Residues 918–987 (IDGDEEIRHL…KELAGLSQAL (70 aa)) adopt a coiled-coil conformation.

Belongs to the MYT1 family.

Its subcellular location is the nucleus. Repressor that binds to DNA sequences containing a bipartite element consisting of a direct repeat of the sequence 5'-AAAGTTT-3' separated by 2-9 nucleotides. Represses basal transcription activity from target promoters. The sequence is that of Suppression of tumorigenicity 18 protein (St18) from Mus musculus (Mouse).